The following is a 160-amino-acid chain: MAKQKKHPTGTIAQNKKARHDYFIEHKFEAGLVLSGWEVKSLRAGKAHLTDSYVLLKDGEAWLFGSHITPLTTASTHVIADPIRTRKLLLNKRELERLEAAVAQKGYTCVAMSLYWSKHLIKCEIALGKGKKEFDKRDTVRERDSNRELQRTMRNKGKEE.

Positions 132-160 are disordered; that stretch reads KEFDKRDTVRERDSNRELQRTMRNKGKEE.

Belongs to the SmpB family.

The protein resides in the cytoplasm. Its function is as follows. Required for rescue of stalled ribosomes mediated by trans-translation. Binds to transfer-messenger RNA (tmRNA), required for stable association of tmRNA with ribosomes. tmRNA and SmpB together mimic tRNA shape, replacing the anticodon stem-loop with SmpB. tmRNA is encoded by the ssrA gene; the 2 termini fold to resemble tRNA(Ala) and it encodes a 'tag peptide', a short internal open reading frame. During trans-translation Ala-aminoacylated tmRNA acts like a tRNA, entering the A-site of stalled ribosomes, displacing the stalled mRNA. The ribosome then switches to translate the ORF on the tmRNA; the nascent peptide is terminated with the 'tag peptide' encoded by the tmRNA and targeted for degradation. The ribosome is freed to recommence translation, which seems to be the essential function of trans-translation. This Pseudomonas entomophila (strain L48) protein is SsrA-binding protein.